A 454-amino-acid chain; its full sequence is MKGEILHLHLGQAGTQLGNSAWELYLLEHGLGHDGRPDPSAKDVVDGGSYETFFTETSNGKYVPRSLFVDLDPSPIDEIRTGGYRQLFHPELLISGKEDAANNYARGHYTIGKEMVDNVIDRIRRVADNCHSLQGFLIFHSFGGGTGSGFGALLLERLSTEYGKKSKLEFAVYPAPRVSTAVVEPYNAVLSTHSTIENSDCTFLVDNEAVYDICRRNLDIPRPSYDHLNRLIAQVVSSITSSLRFDGALNVDLNEFQTNLVPYPRIHYPLISYAPVISASKSAHESFKVQELTFQCFEPNNQMVVCDPRNGKYMAVALLYRGDAVPRDCNAAIAALKAKSSFNLVEWCPTGFKLGINYQKPMAVPAAPGDGGLAPVDRSVSMLSNTTAIAEAWSRLDHKFDLMYSKRAFVHWYVGEGMEEGEFSEAREDLAALEKDYEEVAADSYEGDEGEAEY.

GTP contacts are provided by Gln12, Asp72, Ser141, Gly145, Thr146, Thr180, Asn207, and Asn229. Residue Asp72 coordinates Mg(2+). Residue Glu255 is part of the active site.

The protein belongs to the tubulin family. As to quaternary structure, dimer of alpha and beta chains. A typical microtubule is a hollow water-filled tube with an outer diameter of 25 nm and an inner diameter of 15 nM. Alpha-beta heterodimers associate head-to-tail to form protofilaments running lengthwise along the microtubule wall with the beta-tubulin subunit facing the microtubule plus end conferring a structural polarity. Microtubules usually have 13 protofilaments but different protofilament numbers can be found in some organisms and specialized cells. The cofactor is Mg(2+).

The protein resides in the cytoplasm. It is found in the cytoskeleton. The enzyme catalyses GTP + H2O = GDP + phosphate + H(+). Functionally, tubulin is the major constituent of microtubules, a cylinder consisting of laterally associated linear protofilaments composed of alpha- and beta-tubulin heterodimers. Microtubules grow by the addition of GTP-tubulin dimers to the microtubule end, where a stabilizing cap forms. Below the cap, tubulin dimers are in GDP-bound state, owing to GTPase activity of alpha-tubulin. The chain is Tubulin alpha chain (TUB1) from Colletotrichum orbiculare (strain 104-T / ATCC 96160 / CBS 514.97 / LARS 414 / MAFF 240422) (Cucumber anthracnose fungus).